The sequence spans 277 residues: Pantothenate synthetase (277 aa).

Position 26-33 (26-33 (MGNLHEGH)) interacts with ATP. The active-site Proton donor is histidine 33. Glutamine 57 lines the (R)-pantoate pocket. Residue glutamine 57 coordinates beta-alanine. 144–147 (GKKD) serves as a coordination point for ATP. Residue glutamine 150 coordinates (R)-pantoate. ATP is bound by residues valine 173 and 181–184 (LSSR).

Belongs to the pantothenate synthetase family. Homodimer.

Its subcellular location is the cytoplasm. It carries out the reaction (R)-pantoate + beta-alanine + ATP = (R)-pantothenate + AMP + diphosphate + H(+). The protein operates within cofactor biosynthesis; (R)-pantothenate biosynthesis; (R)-pantothenate from (R)-pantoate and beta-alanine: step 1/1. Its function is as follows. Catalyzes the condensation of pantoate with beta-alanine in an ATP-dependent reaction via a pantoyl-adenylate intermediate. The chain is Pantothenate synthetase from Paraburkholderia xenovorans (strain LB400).